The chain runs to 247 residues: 2,3-bisphosphoglycerate-dependent phosphoglycerate mutase (247 aa).

Substrate-binding positions include 8–15, 21–22, Arg-60, 87–90, Lys-98, 114–115, and 183–184; these read RHGESQWN, TG, ERHY, RR, and GN. His-9 functions as the Tele-phosphohistidine intermediate in the catalytic mechanism. Glu-87 functions as the Proton donor/acceptor in the catalytic mechanism.

This sequence belongs to the phosphoglycerate mutase family. BPG-dependent PGAM subfamily.

The catalysed reaction is (2R)-2-phosphoglycerate = (2R)-3-phosphoglycerate. It functions in the pathway carbohydrate degradation; glycolysis; pyruvate from D-glyceraldehyde 3-phosphate: step 3/5. In terms of biological role, catalyzes the interconversion of 2-phosphoglycerate and 3-phosphoglycerate. This chain is 2,3-bisphosphoglycerate-dependent phosphoglycerate mutase, found in Prosthecochloris aestuarii (strain DSM 271 / SK 413).